A 78-amino-acid chain; its full sequence is Conotoxin Cl11.1 (78 aa).

The signal sequence occupies residues 1-19 (MKLALTFLLILMILPLTTG). Positions 20 to 33 (GKKSDNQALKRLGA) are excised as a propeptide. 4 disulfides stabilise this stretch: Cys47–Cys61, Cys54–Cys66, Cys60–Cys70, and Cys65–Cys77.

This sequence belongs to the conotoxin I1 superfamily. In terms of tissue distribution, expressed by the venom duct.

Its subcellular location is the secreted. The sequence is that of Conotoxin Cl11.1 from Californiconus californicus (California cone).